Here is a 228-residue protein sequence, read N- to C-terminus: Ribonuclease 3 (228 aa).

In terms of domain architecture, RNase III spans 3–132 (IRPLEEHLGI…FLGALYLDQG (130 aa)). Glutamate 45 serves as a coordination point for Mg(2+). Residue aspartate 49 is part of the active site. Mg(2+) is bound by residues aspartate 118 and glutamate 121. Glutamate 121 is an active-site residue. Residues 158-227 (DYKSQLQEFV…AKNALDSINN (70 aa)) enclose the DRBM domain. The segment at 205–228 (GTGRTKKEAEQRAAKNALDSINNS) is disordered.

Belongs to the ribonuclease III family. As to quaternary structure, homodimer. The cofactor is Mg(2+).

It localises to the cytoplasm. It carries out the reaction Endonucleolytic cleavage to 5'-phosphomonoester.. Digests double-stranded RNA. Involved in the processing of primary rRNA transcript to yield the immediate precursors to the large and small rRNAs (23S and 16S). Processes some mRNAs, and tRNAs when they are encoded in the rRNA operon. Processes pre-crRNA and tracrRNA of type II CRISPR loci if present in the organism. This is Ribonuclease 3 from Oceanobacillus iheyensis (strain DSM 14371 / CIP 107618 / JCM 11309 / KCTC 3954 / HTE831).